The sequence spans 245 residues: Carboxymethylenebutenolidase homolog (245 aa).

An N-acetylalanine modification is found at Ala-2. Catalysis depends on residues Cys-132, Asp-179, and His-212. Ser-223 carries the phosphoserine modification.

It belongs to the dienelactone hydrolase family.

It is found in the cytoplasm. It localises to the cytosol. Functionally, cysteine hydrolase. The chain is Carboxymethylenebutenolidase homolog (Cmbl) from Rattus norvegicus (Rat).